We begin with the raw amino-acid sequence, 225 residues long: Probable molybdenum cofactor guanylyltransferase (225 aa).

Residues 20 to 22, K33, D88, and D117 each bind GTP; that span reads LAG. Position 117 (D117) interacts with Mg(2+).

The protein belongs to the MobA family. It depends on Mg(2+) as a cofactor.

Its subcellular location is the cytoplasm. It catalyses the reaction Mo-molybdopterin + GTP + H(+) = Mo-molybdopterin guanine dinucleotide + diphosphate. In terms of biological role, transfers a GMP moiety from GTP to Mo-molybdopterin (Mo-MPT) cofactor (Moco or molybdenum cofactor) to form Mo-molybdopterin guanine dinucleotide (Mo-MGD) cofactor. The polypeptide is Probable molybdenum cofactor guanylyltransferase (Methanosarcina acetivorans (strain ATCC 35395 / DSM 2834 / JCM 12185 / C2A)).